The sequence spans 278 residues: Large ribosomal subunit protein uL2 (278 aa).

The disordered stretch occupies residues 212 to 278; it reads NRHRGIRPQT…IISRKKHKKG (67 aa). Positions 257-278 are enriched in basic residues; the sequence is YKTRKKKASDKLIISRKKHKKG.

The protein belongs to the universal ribosomal protein uL2 family. Part of the 50S ribosomal subunit. Forms a bridge to the 30S subunit in the 70S ribosome.

Functionally, one of the primary rRNA binding proteins. Required for association of the 30S and 50S subunits to form the 70S ribosome, for tRNA binding and peptide bond formation. It has been suggested to have peptidyltransferase activity; this is somewhat controversial. Makes several contacts with the 16S rRNA in the 70S ribosome. This is Large ribosomal subunit protein uL2 from Helicobacter pylori (strain Shi470).